A 208-amino-acid polypeptide reads, in one-letter code: Small ribosomal subunit protein uS4 (208 aa).

Residues 98 to 161 enclose the S4 RNA-binding domain; sequence LRLDNVVFRL…RKVVRISEAL (64 aa).

The protein belongs to the universal ribosomal protein uS4 family. As to quaternary structure, part of the 30S ribosomal subunit. Contacts protein S5. The interaction surface between S4 and S5 is involved in control of translational fidelity.

In terms of biological role, one of the primary rRNA binding proteins, it binds directly to 16S rRNA where it nucleates assembly of the body of the 30S subunit. Functionally, with S5 and S12 plays an important role in translational accuracy. In Anaeromyxobacter sp. (strain Fw109-5), this protein is Small ribosomal subunit protein uS4.